The sequence spans 761 residues: ARF GTPase-activating protein GIT1 (761 aa).

The region spanning 1 to 124 (MSRKGPRAEV…AFVHKLPCRD (124 aa)) is the Arf-GAP domain. The segment at 1 to 124 (MSRKGPRAEV…AFVHKLPCRD (124 aa)) is interaction with gamma-tubulin and localization to the centrosome. A C4-type zinc finger spans residues 11–34 (CADCSAPDPGWASISRGVLVCDEC). 3 ANK repeats span residues 132 to 161 (DLSKQLHSSVRTGNLETCLRLLSLGAQANF), 166 to 195 (KGTTPLHVAAKAGQTLQAELLVVYGADPGS), and 199 to 228 (NGRTPIDYARQAGHHELAERLVECQYELTD). Residue tyrosine 224 is modified to Phosphotyrosine. Positions 245-365 (HYIIPQMADS…QGKSLSSPTD (121 aa)) are interaction with PCLO. The interaction with PTK2/FAK1 stretch occupies residues 253-415 (DSLDLSELAK…NRARSMDSSD (163 aa)). The interaction with ARHGEF7 stretch occupies residues 254–367 (SLDLSELAKA…KSLSSPTDNL (114 aa)). A disordered region spans residues 354–416 (RQQGKSLSSP…RARSMDSSDL (63 aa)). Residues 357 to 374 (GKSLSSPTDNLELSLRSQ) show a composition bias toward polar residues. Residues serine 359 and serine 362 each carry the phosphoserine modification. Phosphothreonine is present on threonine 364. Positions 366–587 (NLELSLRSQS…QEGSRHTSKL (222 aa)) are interaction with NCK2 and GRIN3A. A required for localization at synapses region spans residues 366–587 (NLELSLRSQS…QEGSRHTSKL (222 aa)). A phosphoserine mark is found at serine 370 and serine 375. Tyrosine 383 carries the post-translational modification Phosphotyrosine. Serine 385 and serine 388 each carry phosphoserine. A compositionally biased stretch (acidic residues) spans 385–394 (SVASDEDTDQ). Threonine 392 is modified (phosphothreonine). Phosphoserine is present on residues serine 410, serine 413, and serine 417. An interaction with MAPK1 region spans residues 411-466 (MDSSDLSDGAVTLQEYLELKKALATSEAKVQQLMKVNSSLSDELRRLQREIHKLQA). An interaction with IKBKG region spans residues 420–620 (AVTLQEYLEL…EGKRFLELGK (201 aa)). The stretch at 440–474 (VQQLMKVNSSLSDELRRLQREIHKLQAENLQLRQP) forms a coiled coil. The interval 471–501 (LRQPPGPVPTPPLPSERAEHTPMAPGGSTHR) is disordered. Positions 474–484 (PPGPVPTPPLP) are enriched in pro residues. Phosphothreonine is present on threonine 480. Serine 498 and serine 536 each carry phosphoserine. Threonine 537 is modified (phosphothreonine). Phosphotyrosine is present on residues tyrosine 545 and tyrosine 554. Phosphoserine is present on residues serine 561, serine 571, serine 592, and serine 596. Residues 572–606 (PLLSCSQEGSRHTSKLSRHGSGADSDYENTQSGDP) form a disordered region. Threonine 601 is modified (phosphothreonine). Serine 630 carries the post-translational modification Phosphoserine. Positions 637–761 (PGLPSTEDVI…VTITTREKKQ (125 aa)) are interaction with PXN and TGFB1I1.

In terms of assembly, forms homodimers and possibly oligomers. May forms heterooligomers with GIT2. Interacts with G protein-coupled receptor kinases, including GRK2, GRK3, GRK5 and GRK6. Interacts with PPFIA1, PPFIA2 and PPFIA4. Interacts with GRIP1 and forms a ternary complex with PPFIA1 and GRIP1. Directly interacts with ARHGEF7/beta-PIX, forming in vitro a heptameric complex made of a GIT1 dimer and an ARHGEF7 trimer. Directly interacts with PXN/paxillin; this interaction is enhanced in the presence of ARHGEF7. Directly interacts (via C-terminus) with TGFB1I1/Hic-5 (via LD motif 3). Directly interacts with PTK2/FAK1. May interact with PTK2B/PYK2; this interaction may be indirect. Interacts with AMPA receptors GRIA2/3. Directly interacts with protein Piccolo/PCLO. Forms a complex with Ephrin-B1/EFNB1 and NCK2/GRB4 (via SH2); this interaction is important for spine morphogenesis and synapse formation. Interaction with NCK2 is transient and depends upon GIT1 phosphorylation at Tyr-383. Interacts with GRIN3A/GluN3A (via C-terminus); this interaction competes with GIT1 interaction with ARHGEF7 and limits synaptic localization of GIT1. Interacts with IKBKG/NEMO in resting bone mesenchymal stem cells, as well as in TNF-stimulated cells; this interaction may increase IKBKG affinity for 'Lys-63'-linked polyubiquitin chains. Interacts with GABA(A) receptors, including GABRB3 and GABRG2. Interacts with SCRIB. Interacts (via N- and C-terminus) with ENTR1/SDCCAG3 (via N-terminus); this interaction is direct. May form a tripartite complex with ENTR1 and PTPN13. Interacts with YWHAZ. Interacts with PAK1. Interacts with PAK3. Directly interacts (via N-terminus) with gamma-tubulin. Interacts with MAPK1 and MAPK3; this interaction is required for MAPK1/3 recruitment to focal adhesions. Phosphorylated by PAK1. Phosphorylation on tyrosine residues may be catalyzed by PTK2/FAK1 and SRC in growing fibroblasts. Phosphorylation at Tyr-383 is induced by activation of Ephrin-B1/EFNB1 and catalyzed by SRC family kinases. It is required for the interaction with NCK2 and for GIT1 recruitment to synapses in hippocampal neurons.

The protein localises to the cytoplasm. Its subcellular location is the synapse. It localises to the presynapse. The protein resides in the postsynapse. It is found in the postsynaptic density. The protein localises to the cell junction. Its subcellular location is the focal adhesion. It localises to the cell projection. The protein resides in the lamellipodium. It is found in the cytoskeleton. The protein localises to the microtubule organizing center. Its subcellular location is the centrosome. It localises to the spindle pole. Functionally, GTPase-activating protein for ADP ribosylation factor family members, including ARF1. Multidomain scaffold protein that interacts with numerous proteins and therefore participates in many cellular functions, including receptor internalization, focal adhesion remodeling, and signaling by both G protein-coupled receptors and tyrosine kinase receptors. Through PAK1 activation, positively regulates microtubule nucleation during interphase. Plays a role in the regulation of cytokinesis; for this function, may act in a pathway also involving ENTR1 and PTPN13. May promote cell motility both by regulating focal complex dynamics and by local activation of RAC1. May act as scaffold for MAPK1/3 signal transduction in focal adhesions. Recruits MAPK1/3/ERK1/2 to focal adhesions after EGF stimulation via a Src-dependent pathway, hence stimulating cell migration. Plays a role in brain development and function. Involved in the regulation of spine density and synaptic plasticity that is required for processes involved in learning. Plays an important role in dendritic spine morphogenesis and synapse formation. In hippocampal neurons, recruits guanine nucleotide exchange factors (GEFs), such as ARHGEF7/beta-PIX, to the synaptic membrane. These in turn locally activate RAC1, which is an essential step for spine morphogenesis and synapse formation. May contribute to the organization of presynaptic active zones through oligomerization and formation of a Piccolo/PCLO-based protein network, which includes ARHGEF7/beta-PIX and FAK1. In neurons, through its interaction with liprin-alpha family members, may be required for AMPA receptor (GRIA2/3) proper targeting to the cell membrane. In complex with GABA(A) receptors and ARHGEF7, plays a crucial role in regulating GABA(A) receptor synaptic stability, maintaining GPHN/gephyrin scaffolds and hence GABAergic inhibitory synaptic transmission, by locally coordinating RAC1 and PAK1 downstream effector activity, leading to F-actin stabilization. May also be important for RAC1 downstream signaling pathway through PAK3 and regulation of neuronal inhibitory transmission at presynaptic input. Required for successful bone regeneration during fracture healing. The function in intramembranous ossification may, at least partly, exerted by macrophages in which GIT1 is a key negative regulator of redox homeostasis, IL1B production, and glycolysis, acting through the ERK1/2/NRF2/NFE2L2 axis. May play a role in angiogenesis during fracture healing. In this process, may regulate activation of the canonical NF-kappa-B signal in bone mesenchymal stem cells by enhancing the interaction between NEMO and 'Lys-63'-ubiquitinated RIPK1/RIP1, eventually leading to enhanced production of VEGFA and others angiogenic factors. Essential for VEGF signaling through the activation of phospholipase C-gamma and ERK1/2, hence may control endothelial cell proliferation and angiogenesis. The chain is ARF GTPase-activating protein GIT1 (GIT1) from Homo sapiens (Human).